The following is a 103-amino-acid chain: Small ribosomal subunit protein uS10 (103 aa).

It belongs to the universal ribosomal protein uS10 family. As to quaternary structure, part of the 30S ribosomal subunit.

Functionally, involved in the binding of tRNA to the ribosomes. The polypeptide is Small ribosomal subunit protein uS10 (Aromatoleum aromaticum (strain DSM 19018 / LMG 30748 / EbN1) (Azoarcus sp. (strain EbN1))).